The following is a 65-amino-acid chain: MNKLYRSEKNKKIAGVIGGLAEYFNWDASLLRVITVILAIMTSVLPVLLIYIIWIFIVPSERDMK.

A helical transmembrane segment spans residues 37–57 (ILAIMTSVLPVLLIYIIWIFI).

The protein localises to the cell membrane. This is an uncharacterized protein from Bacillus subtilis (strain 168).